Consider the following 556-residue polypeptide: Undecaprenyl phosphate-alpha-4-amino-4-deoxy-L-arabinose arabinosyl transferase (556 aa).

10 helical membrane-spanning segments follow: residues Phe-88–Leu-108, Leu-116–Val-136, Phe-179–Leu-199, Leu-207–Leu-227, Ala-258–Leu-278, Phe-296–Leu-316, Tyr-319–Ala-339, Ile-355–Pro-375, Leu-384–Leu-404, and Trp-410–Pro-430.

Belongs to the glycosyltransferase 83 family.

The protein localises to the cell inner membrane. It carries out the reaction 4-amino-4-deoxy-alpha-L-arabinopyranosyl di-trans,octa-cis-undecaprenyl phosphate + lipid IVA = lipid IIA + di-trans,octa-cis-undecaprenyl phosphate.. The protein operates within lipopolysaccharide metabolism; 4-amino-4-deoxy-beta-L-arabinose-lipid A biosynthesis. Functionally, catalyzes the transfer of the L-Ara4N moiety of the glycolipid undecaprenyl phosphate-alpha-L-Ara4N to lipid A. The modified arabinose is attached to lipid A and is required for resistance to polymyxin and cationic antimicrobial peptides. The protein is Undecaprenyl phosphate-alpha-4-amino-4-deoxy-L-arabinose arabinosyl transferase of Pectobacterium atrosepticum (strain SCRI 1043 / ATCC BAA-672) (Erwinia carotovora subsp. atroseptica).